Here is a 1028-residue protein sequence, read N- to C-terminus: RNA cytidine acetyltransferase 1 (1028 aa).

ATP-binding positions include 286 to 295 and Arg-460; that span reads GRGKSAALGL. The N-acetyltransferase domain maps to 548 to 731; it reads VLLGPVDESK…FAPFYISQIP (184 aa). Acetyl-CoA-binding positions include 619–621, 626–632, and Lys-719; these read IAV and MKMGYGS. Residues 989 to 1028 are disordered; it reads ISIESTKTDNKKEKPSGFDKSAKKRGNDKHSSTSNKKRRA. A compositionally biased stretch (basic and acidic residues) spans 994–1009; sequence TKTDNKKEKPSGFDKS.

It belongs to the RNA cytidine acetyltransferase family. NAT10 subfamily.

Its subcellular location is the nucleus. It is found in the nucleolus. It catalyses the reaction a cytidine in 18S rRNA + acetyl-CoA + ATP + H2O = an N(4)-acetylcytidine in 18S rRNA + ADP + phosphate + CoA + H(+). The catalysed reaction is a cytidine in tRNA + acetyl-CoA + ATP + H2O = an N(4)-acetylcytidine in tRNA + ADP + phosphate + CoA + H(+). Functionally, RNA cytidine acetyltransferase with specificity toward both 18S rRNA and tRNAs. Catalyzes the formation of N(4)-acetylcytidine (ac4C) in 18S rRNA. Required for early nucleolar cleavages of precursor rRNA at sites A0, A1 and A2 during 18S rRNA synthesis. Catalyzes the formation of ac4C in serine and leucine tRNAs. Requires a tRNA-binding adapter protein for full tRNA acetyltransferase activity but not for 18S rRNA acetylation. This chain is RNA cytidine acetyltransferase 1, found in Arabidopsis thaliana (Mouse-ear cress).